A 246-amino-acid polypeptide reads, in one-letter code: Probable 2-phosphosulfolactate phosphatase (246 aa).

The protein belongs to the ComB family. It depends on Mg(2+) as a cofactor.

The catalysed reaction is (2R)-O-phospho-3-sulfolactate + H2O = (2R)-3-sulfolactate + phosphate. This chain is Probable 2-phosphosulfolactate phosphatase, found in Synechococcus sp. (strain WH7803).